A 305-amino-acid polypeptide reads, in one-letter code: Methionyl-tRNA formyltransferase (305 aa).

111 to 114 is a (6S)-5,6,7,8-tetrahydrofolate binding site; it reads SLLP.

It belongs to the Fmt family.

It catalyses the reaction L-methionyl-tRNA(fMet) + (6R)-10-formyltetrahydrofolate = N-formyl-L-methionyl-tRNA(fMet) + (6S)-5,6,7,8-tetrahydrofolate + H(+). Attaches a formyl group to the free amino group of methionyl-tRNA(fMet). The formyl group appears to play a dual role in the initiator identity of N-formylmethionyl-tRNA by promoting its recognition by IF2 and preventing the misappropriation of this tRNA by the elongation apparatus. This chain is Methionyl-tRNA formyltransferase, found in Helicobacter pylori (strain P12).